We begin with the raw amino-acid sequence, 105 residues long: Phosphoribosyl-AMP cyclohydrolase (105 aa).

Residue Asp72 participates in Mg(2+) binding. Residue Cys73 participates in Zn(2+) binding. Residues Asp74 and Asp76 each coordinate Mg(2+). Zn(2+)-binding residues include Cys89 and Cys96.

It belongs to the PRA-CH family. In terms of assembly, homodimer. Mg(2+) is required as a cofactor. Requires Zn(2+) as cofactor.

It localises to the cytoplasm. The enzyme catalyses 1-(5-phospho-beta-D-ribosyl)-5'-AMP + H2O = 1-(5-phospho-beta-D-ribosyl)-5-[(5-phospho-beta-D-ribosylamino)methylideneamino]imidazole-4-carboxamide. Its pathway is amino-acid biosynthesis; L-histidine biosynthesis; L-histidine from 5-phospho-alpha-D-ribose 1-diphosphate: step 3/9. Its function is as follows. Catalyzes the hydrolysis of the adenine ring of phosphoribosyl-AMP. The protein is Phosphoribosyl-AMP cyclohydrolase of Listeria monocytogenes serotype 4a (strain HCC23).